Reading from the N-terminus, the 88-residue chain is DNA-directed RNA polymerase subunit omega (88 aa).

This sequence belongs to the RNA polymerase subunit omega family. In terms of assembly, the RNAP catalytic core consists of 2 alpha, 1 beta, 1 beta' and 1 omega subunit. When a sigma factor is associated with the core the holoenzyme is formed, which can initiate transcription.

It catalyses the reaction RNA(n) + a ribonucleoside 5'-triphosphate = RNA(n+1) + diphosphate. In terms of biological role, promotes RNA polymerase assembly. Latches the N- and C-terminal regions of the beta' subunit thereby facilitating its interaction with the beta and alpha subunits. This is DNA-directed RNA polymerase subunit omega from Anaeromyxobacter sp. (strain Fw109-5).